The chain runs to 218 residues: Pyridoxine/pyridoxamine 5'-phosphate oxidase (218 aa).

Residues 14-17 and K72 each bind substrate; that span reads RREY. FMN contacts are provided by residues 67 to 72, 82 to 83, R88, K89, and Q111; these read RIVLLK and YT. Substrate is bound by residues Y129, R133, and S137. FMN-binding positions include 146–147 and W191; that span reads QS. Residue 197 to 199 coordinates substrate; it reads RLH. R201 contributes to the FMN binding site.

The protein belongs to the pyridoxamine 5'-phosphate oxidase family. As to quaternary structure, homodimer. FMN serves as cofactor.

It carries out the reaction pyridoxamine 5'-phosphate + O2 + H2O = pyridoxal 5'-phosphate + H2O2 + NH4(+). The enzyme catalyses pyridoxine 5'-phosphate + O2 = pyridoxal 5'-phosphate + H2O2. It functions in the pathway cofactor metabolism; pyridoxal 5'-phosphate salvage; pyridoxal 5'-phosphate from pyridoxamine 5'-phosphate: step 1/1. Its pathway is cofactor metabolism; pyridoxal 5'-phosphate salvage; pyridoxal 5'-phosphate from pyridoxine 5'-phosphate: step 1/1. Its function is as follows. Catalyzes the oxidation of either pyridoxine 5'-phosphate (PNP) or pyridoxamine 5'-phosphate (PMP) into pyridoxal 5'-phosphate (PLP). The polypeptide is Pyridoxine/pyridoxamine 5'-phosphate oxidase (Salmonella typhi).